The following is a 295-amino-acid chain: Pyridoxal 5'-phosphate synthase subunit PdxS (295 aa).

Asp25 is a binding site for D-ribose 5-phosphate. The Schiff-base intermediate with D-ribose 5-phosphate role is filled by Lys82. Gly154 provides a ligand contact to D-ribose 5-phosphate. Position 166 (Arg166) interacts with D-glyceraldehyde 3-phosphate. D-ribose 5-phosphate-binding positions include Gly215 and 236–237; that span reads GS.

Belongs to the PdxS/SNZ family. In the presence of PdxT, forms a dodecamer of heterodimers.

The enzyme catalyses aldehydo-D-ribose 5-phosphate + D-glyceraldehyde 3-phosphate + L-glutamine = pyridoxal 5'-phosphate + L-glutamate + phosphate + 3 H2O + H(+). It functions in the pathway cofactor biosynthesis; pyridoxal 5'-phosphate biosynthesis. Functionally, catalyzes the formation of pyridoxal 5'-phosphate from ribose 5-phosphate (RBP), glyceraldehyde 3-phosphate (G3P) and ammonia. The ammonia is provided by the PdxT subunit. Can also use ribulose 5-phosphate and dihydroxyacetone phosphate as substrates, resulting from enzyme-catalyzed isomerization of RBP and G3P, respectively. The chain is Pyridoxal 5'-phosphate synthase subunit PdxS from Bacillus cereus (strain 03BB102).